Here is a 3432-residue protein sequence, read N- to C-terminus: Genome polyprotein (3432 aa).

Residues 2-15 form an interaction with host EXOC1 region; that stretch reads TKKPGGPGKNRAIN. Residues 2-109 lie on the Cytoplasmic side of the membrane; that stretch reads TKKPGGPGKN…KKQNKRGGNE (108 aa). The tract at residues 37 to 72 is hydrophobic; homodimerization of capsid protein C; sequence LLDGRGPVRFVLALITFFKFTALAPTKALLGRWRAV. Residues 106-127 constitute a propeptide, ER anchor for the capsid protein C, removed in mature form by serine protease NS3; that stretch reads GGNESSIMWLASLAIVIACAGA. The chain crosses the membrane as a helical span at residues 110 to 130; sequence SSIMWLASLAIVIACAGAMKL. The Extracellular segment spans residues 131–253; the sequence is SNFQGKLLMT…ATRYLMKTEN (123 aa). An N-linked (GlcNAc...) asparagine; by host glycan is attached at Asn-142. The helical transmembrane segment at 254 to 274 threads the bilayer; the sequence is WIIRNPGYAFLAAALGWMLGS. Residues 275–279 lie on the Cytoplasmic side of the membrane; it reads NSGQR. Residues 280–294 traverse the membrane as a helical segment; the sequence is VVFTILLLLVAPAYS. The Extracellular segment spans residues 295 to 746; it reads FNCLGMGNRD…QVFGGAFRTL (452 aa). Intrachain disulfides connect Cys-297/Cys-324, Cys-354/Cys-410, Cys-354/Cys-415, Cys-368/Cys-399, Cys-386/Cys-410, and Cys-386/Cys-415. A fusion peptide region spans residues 392–405; the sequence is DRGWGNGCGLFGKG. Asn-448 is a glycosylation site (N-linked (GlcNAc...) asparagine; by host). 2 disulfides stabilise this stretch: Cys-484-Cys-581 and Cys-598-Cys-629. A helical membrane pass occupies residues 747–767; the sequence is FGGMSWITQGLMGALLLWMGV. The Cytoplasmic portion of the chain corresponds to 768–773; sequence NARDRS. The chain crosses the membrane as a helical span at residues 774-794; that stretch reads IALAFLATGGVLVFLATNVHA. Residues 795–1219 are Extracellular-facing; the sequence is DTGCAIDITR…AFAEANSGGD (425 aa). Disulfide bonds link Cys-798–Cys-809, Cys-849–Cys-937, Cys-973–Cys-1017, Cys-1074–Cys-1123, Cys-1085–Cys-1106, and Cys-1107–Cys-1110. Asn-924 and Asn-1001 each carry an N-linked (GlcNAc...) asparagine; by host glycan. Residues 1220 to 1240 form a helical membrane-spanning segment; sequence VLHLALIAVFKIQPAFLVMNM. Residues 1241–1250 lie on the Cytoplasmic side of the membrane; sequence LSARWTNQEN. The helical transmembrane segment at 1251–1271 threads the bilayer; that stretch reads MVLVLGAAFFQLASVDLQIGV. Position 1272 (His-1272) is a topological domain, lumenal. A helical transmembrane segment spans residues 1273 to 1293; the sequence is GILNAAAIAWMIVRAITFPTT. Topologically, residues 1294 to 1309 are cytoplasmic; the sequence is STVAMPVLALLTPGMR. Residues 1310–1330 form a helical membrane-spanning segment; it reads ALYLDTYRIILLVIGICSLLQ. Over 1331–1341 the chain is Lumenal; it reads ERRKTMAKKKG. Residues 1342–1362 form a helical membrane-spanning segment; sequence AVLLGLALTSTGWFSPTTIAA. Residues 1363 to 1374 are Cytoplasmic-facing; sequence GLMVCNPNKKRG. The chain crosses the membrane as a helical span at residues 1375-1395; the sequence is WPATEFLSAVGLMFAIVGGLA. The Lumenal segment spans residues 1396-1398; sequence ELD. The helical transmembrane segment at 1399-1419 threads the bilayer; the sequence is IESMSIPFMLAGLMAVSYVIS. Residues 1420-1476 are Cytoplasmic-facing; the sequence is GKATDMWLDRAADISWEMEAAITGSSRRLDVKLDDDGDFHLIDDPGVPWKVWLLRMS. Positions 1427 to 1466 are interacts with and activates NS3 protease; it reads LDRAADISWEMEAAITGSSRRLDVKLDDDGDFHLIDDPGV. Positions 1477 to 1497 form an intramembrane region, helical; it reads CIGLAALTPWAIVPAAFGYWL. The Cytoplasmic portion of the chain corresponds to 1498–2173; it reads TLKTTKRGGV…RMALEELPDA (676 aa). The 178-residue stretch at 1505-1682 folds into the Peptidase S7 domain; it reads GGVFWDTPSP…DRQEEPVPDA (178 aa). Residues His-1555, Asp-1579, and Ser-1639 each act as charge relay system; for serine protease NS3 activity in the active site. The region spanning 1685 to 1841 is the Helicase ATP-binding domain; that stretch reads PSMLKKRQMT…DSNAPIHDLQ (157 aa). The interval 1689-1692 is important for RNA-binding; it reads KKRQ. Position 1698–1705 (1698–1705) interacts with ATP; sequence LHPGSGKT. A DEAH box motif is present at residues 1789–1792; it reads DEAH. The Helicase C-terminal domain occupies 1852-2017; that stretch reads GYEWITEYAG…GLVAQLYGPE (166 aa). Position 1893 is an N6-acetyllysine; by host (Lys-1893). Positions 1950 to 1969 are disordered; sequence NPSPITSASAAQRRGRVGRN. Positions 2168-2172 are regulates the ATPase activity of NS3 helicase; that stretch reads EELPD. A helical membrane pass occupies residues 2174–2194; sequence LETITLIVAITVMTGGFFLLM. At 2195–2199 the chain is on the lumenal side; that stretch reads MQRKG. An intramembrane region (helical) is located at residues 2200–2220; it reads IGKMGLGALVLTLATFFLWAA. Glu-2221 is a topological domain (lumenal). A helical transmembrane segment spans residues 2222–2242; sequence VPGTKIAGTLLVALLLMVVLI. Residues 2243-2257 are Cytoplasmic-facing; that stretch reads PEPEKQRSQTDNQLA. The chain crosses the membrane as a helical span at residues 2258–2278; the sequence is VFLICVLTVVGVVAANEYGML. Residues 2279–2311 lie on the Lumenal side of the membrane; it reads EKTKADLKSMFGGRTQAPGLTGLPSMALDLRPA. The segment at residues 2312–2332 is an intramembrane region (helical); it reads TAWALYGGSTVVLTPLLKHLI. Residues 2333–2368 lie on the Lumenal side of the membrane; the sequence is TSEYVTTSLASISSQAGSLFVLPRGVPFTDLDLTVG. A helical transmembrane segment spans residues 2369–2389; it reads LVFLGCWGQITLTTFLTAMVL. The Cytoplasmic segment spans residues 2390-2444; that stretch reads VTLHYGYMLPGWQAEALRAAQRRTAAGIMKNAVVDGMVATDVPELERTTPLMQKK. The chain crosses the membrane as a helical span at residues 2445–2465; the sequence is VGQVLLIGVSVAAFLVNPNVT. Residues 2466–2469 lie on the Lumenal side of the membrane; that stretch reads TVRE. Residues 2470–2490 traverse the membrane as a helical segment; it reads AGVLVTAATLTLWDNGASAVW. The Cytoplasmic portion of the chain corresponds to 2491–3432; the sequence is NSTTATGLCH…DVLIQEDRVI (942 aa). Positions 2528 to 2793 constitute an mRNA cap 0-1 NS5-type MT domain; that stretch reads GRPGGRTLGE…DVNLGSGTRA (266 aa). Ser-2583 serves as a coordination point for S-adenosyl-L-methionine. Ser-2583 bears the Phosphoserine mark. The For 2'-O-MTase activity role is filled by Lys-2588. Gly-2613, Trp-2614, Thr-2631, Lys-2632, Asp-2658, and Val-2659 together coordinate S-adenosyl-L-methionine. The active-site For 2'-O-MTase activity is Asp-2673. Ile-2674 contributes to the S-adenosyl-L-methionine binding site. Catalysis depends on for 2'-O-MTase activity residues Lys-2709 and Glu-2745. Tyr-2747 provides a ligand contact to S-adenosyl-L-methionine. Zn(2+) is bound by residues Glu-2967, His-2971, Cys-2976, and Cys-2979. A RdRp catalytic domain is found at 3057 to 3209; the sequence is GKMYADDTAG…KPLDDRFATA (153 aa). Residues His-3244, Cys-3260, and Cys-3379 each coordinate Zn(2+).

In the N-terminal section; belongs to the class I-like SAM-binding methyltransferase superfamily. mRNA cap 0-1 NS5-type methyltransferase family. Homodimer. Interacts (via N-terminus) with host EXOC1 (via C-terminus); this interaction results in EXOC1 degradation through the proteasome degradation pathway. As to quaternary structure, forms heterodimers with envelope protein E in the endoplasmic reticulum and Golgi. In terms of assembly, homodimer; in the endoplasmic reticulum and Golgi. Interacts with protein prM. Interacts with non-structural protein 1. Interacts with host HSPA5. Homodimer; Homohexamer when secreted. Interacts with envelope protein E. NS1 interacts with NS4B. Interacts with host complement protein CFH; this interaction leads to the degradation of C3. As to quaternary structure, interacts (via N-terminus) with serine protease NS3. In terms of assembly, forms a heterodimer with serine protease NS3. May form homooligomers. Forms a heterodimer with NS2B. Interacts with non-structural protein 2A (via N-terminus). Interacts with NS4B. Interacts with unphosphorylated RNA-directed RNA polymerase NS5; this interaction stimulates RNA-directed RNA polymerase NS5 guanylyltransferase activity. Interacts with host ILF2. As to quaternary structure, interacts with serine protease NS3. In terms of assembly, homodimer. Interacts with host STAT2; this interaction inhibits the phosphorylation of the latter, and, when all viral proteins are present (polyprotein), targets STAT2 for degradation. Interacts with serine protease NS3. Mn(2+) is required as a cofactor. Mg(2+) serves as cofactor. Post-translationally, specific enzymatic cleavages in vivo yield mature proteins. Cleavages in the lumen of endoplasmic reticulum are performed by host signal peptidase, whereas cleavages in the cytoplasmic side are performed by serine protease NS3. Signal cleavage at the 2K-4B site requires a prior NS3 protease-mediated cleavage at the 4A-2K site. Cleaved in post-Golgi vesicles by a host furin, releasing the mature small envelope protein M, and peptide pr. This cleavage is incomplete as up to 30% of viral particles still carry uncleaved prM. In terms of processing, N-glycosylated. Post-translationally, N-glycosylated. The excreted form is glycosylated and this is required for efficient secretion of the protein from infected cells. Acetylated by host KAT5. Acetylation modulates NS3 RNA-binding and unwinding activities and plays an important positive role for viral replication. In terms of processing, phosphorylated on serines residues. This phosphorylation may trigger NS5 nuclear localization.

Its subcellular location is the host endoplasmic reticulum membrane. It is found in the virion. It localises to the host nucleus. The protein localises to the host cytoplasm. The protein resides in the host perinuclear region. Its subcellular location is the secreted. It is found in the virion membrane. It localises to the host cell surface. The enzyme catalyses Selective hydrolysis of -Xaa-Xaa-|-Yaa- bonds in which each of the Xaa can be either Arg or Lys and Yaa can be either Ser or Ala.. The catalysed reaction is a ribonucleoside 5'-triphosphate + H2O = a ribonucleoside 5'-diphosphate + phosphate + H(+). It carries out the reaction RNA(n) + a ribonucleoside 5'-triphosphate = RNA(n+1) + diphosphate. It catalyses the reaction ATP + H2O = ADP + phosphate + H(+). The enzyme catalyses a 5'-end (5'-triphosphoguanosine)-ribonucleoside in mRNA + S-adenosyl-L-methionine = a 5'-end (N(7)-methyl 5'-triphosphoguanosine)-ribonucleoside in mRNA + S-adenosyl-L-homocysteine. The catalysed reaction is a 5'-end (N(7)-methyl 5'-triphosphoguanosine)-ribonucleoside in mRNA + S-adenosyl-L-methionine = a 5'-end (N(7)-methyl 5'-triphosphoguanosine)-(2'-O-methyl-ribonucleoside) in mRNA + S-adenosyl-L-homocysteine + H(+). Plays a role in virus budding by binding to the cell membrane and gathering the viral RNA into a nucleocapsid that forms the core of a mature virus particle. During virus entry, may induce genome penetration into the host cytoplasm after hemifusion induced by the surface proteins. Can migrate to the cell nucleus where it modulates host functions. Overcomes the anti-viral effects of host EXOC1 by sequestering and degrading the latter through the proteasome degradation pathway. Its function is as follows. Inhibits RNA silencing by interfering with host Dicer. In terms of biological role, prevents premature fusion activity of envelope proteins in trans-Golgi by binding to envelope protein E at pH6.0. After virion release in extracellular space, gets dissociated from E dimers. Functionally, acts as a chaperone for envelope protein E during intracellular virion assembly by masking and inactivating envelope protein E fusion peptide. prM is the only viral peptide matured by host furin in the trans-Golgi network probably to avoid catastrophic activation of the viral fusion activity in acidic Golgi compartment prior to virion release. prM-E cleavage is inefficient, and many virions are only partially matured. These uncleaved prM would play a role in immune evasion. May play a role in virus budding. Exerts cytotoxic effects by activating a mitochondrial apoptotic pathway through M ectodomain. May display a viroporin activity. Its function is as follows. Binds to host cell surface receptor and mediates fusion between viral and cellular membranes. Efficient virus attachment to cell is, at least in part, mediated by host HSPA5. Envelope protein is synthesized in the endoplasmic reticulum in the form of heterodimer with protein prM. They play a role in virion budding in the ER, and the newly formed immature particle is covered with 60 spikes composed of heterodimer between precursor prM and envelope protein E. The virion is transported to the Golgi apparatus where the low pH causes dissociation of PrM-E heterodimers and formation of E homodimers. prM-E cleavage is inefficient, and many virions are only partially matured. These uncleaved prM would play a role in immune evasion. In terms of biological role, involved in immune evasion, pathogenesis and viral replication. Once cleaved off the polyprotein, is targeted to three destinations: the viral replication cycle, the plasma membrane and the extracellular compartment. Essential for viral replication. Required for formation of the replication complex and recruitment of other non-structural proteins to the ER-derived membrane structures. Excreted as a hexameric lipoparticle that plays a role against host immune response. Antagonizing the complement function. Binds to the host macrophages and dendritic cells. Inhibits signal transduction originating from Toll-like receptor 3 (TLR3). Functionally, component of the viral RNA replication complex that functions in virion assembly and antagonizes the host alpha/beta interferon antiviral response. Required cofactor for the serine protease function of NS3. May have membrane-destabilizing activity and form viroporins. Its function is as follows. Displays three enzymatic activities: serine protease, NTPase and RNA helicase. NS3 serine protease, in association with NS2B, performs its autocleavage and cleaves the polyprotein at dibasic sites in the cytoplasm: C-prM, NS2A-NS2B, NS2B-NS3, NS3-NS4A, NS4A-2K and NS4B-NS5. NS3 RNA helicase binds RNA and unwinds dsRNA in the 3' to 5' direction. In terms of biological role, regulates the ATPase activity of the NS3 helicase activity. NS4A allows NS3 helicase to conserve energy during unwinding. Functionally, functions as a signal peptide for NS4B and is required for the interferon antagonism activity of the latter. Induces the formation of ER-derived membrane vesicles where the viral replication takes place. Inhibits interferon (IFN)-induced host STAT1 phosphorylation and nuclear translocation, thereby preventing the establishment of cellular antiviral state by blocking the IFN-alpha/beta pathway. Inhibits STAT2 translocation in the nucleus after IFN-alpha treatment. Its function is as follows. Replicates the viral (+) and (-) RNA genome. Performs the capping of genomes in the cytoplasm. NS5 methylates viral RNA cap at guanine N-7 and ribose 2'-O positions. Besides its role in RNA genome replication, also prevents the establishment of cellular antiviral state by blocking the interferon-alpha/beta (IFN-alpha/beta) signaling pathway. Inhibits host TYK2 and STAT2 phosphorylation, thereby preventing activation of JAK-STAT signaling pathway. The chain is Genome polyprotein from Japanese encephalitis virus (strain M28) (JEV).